A 227-amino-acid polypeptide reads, in one-letter code: MAYPFQLGLQDATSPIMEELLHFHDHTLMIVFLISSLVLYIISSMLTTKLTHTSTMDAQEVETVWTILPAIILVLIALPSLRILYMMDEINNPSLTVKTLGHQWYWSYEYTDYEDLNFDSYMIPTQELKPGELRLLEVDNRVVLPMEMTIRMLISSEDVLHSWAVPSLGLKTDAIPGRLNQTTLMATRPGLYYGQCSEICGSNHSFMPIVLEMVPLSYFETWSALML.

Over Met-1–Ser-14 the chain is Mitochondrial intermembrane. Residues Pro-15–Met-45 form a helical membrane-spanning segment. At Leu-46–Gln-59 the chain is on the mitochondrial matrix side. The chain crosses the membrane as a helical span at residues Glu-60 to Met-87. The Mitochondrial intermembrane segment spans residues Asp-88–Leu-227. Residues His-161, Cys-196, Glu-198, Cys-200, His-204, and Met-207 each contribute to the Cu cation site. Position 198 (Glu-198) interacts with Mg(2+). Residue Tyr-218 is modified to Phosphotyrosine.

Belongs to the cytochrome c oxidase subunit 2 family. In terms of assembly, component of the cytochrome c oxidase (complex IV, CIV), a multisubunit enzyme composed of 14 subunits. The complex is composed of a catalytic core of 3 subunits MT-CO1, MT-CO2 and MT-CO3, encoded in the mitochondrial DNA, and 11 supernumerary subunits COX4I, COX5A, COX5B, COX6A, COX6B, COX6C, COX7A, COX7B, COX7C, COX8 and NDUFA4, which are encoded in the nuclear genome. The complex exists as a monomer or a dimer and forms supercomplexes (SCs) in the inner mitochondrial membrane with NADH-ubiquinone oxidoreductase (complex I, CI) and ubiquinol-cytochrome c oxidoreductase (cytochrome b-c1 complex, complex III, CIII), resulting in different assemblies (supercomplex SCI(1)III(2)IV(1) and megacomplex MCI(2)III(2)IV(2)). Found in a complex with TMEM177, COA6, COX18, COX20, SCO1 and SCO2. Interacts with TMEM177 in a COX20-dependent manner. Interacts with COX20. Interacts with COX16. The cofactor is Cu cation.

It localises to the mitochondrion inner membrane. The catalysed reaction is 4 Fe(II)-[cytochrome c] + O2 + 8 H(+)(in) = 4 Fe(III)-[cytochrome c] + 2 H2O + 4 H(+)(out). In terms of biological role, component of the cytochrome c oxidase, the last enzyme in the mitochondrial electron transport chain which drives oxidative phosphorylation. The respiratory chain contains 3 multisubunit complexes succinate dehydrogenase (complex II, CII), ubiquinol-cytochrome c oxidoreductase (cytochrome b-c1 complex, complex III, CIII) and cytochrome c oxidase (complex IV, CIV), that cooperate to transfer electrons derived from NADH and succinate to molecular oxygen, creating an electrochemical gradient over the inner membrane that drives transmembrane transport and the ATP synthase. Cytochrome c oxidase is the component of the respiratory chain that catalyzes the reduction of oxygen to water. Electrons originating from reduced cytochrome c in the intermembrane space (IMS) are transferred via the dinuclear copper A center (CU(A)) of subunit 2 and heme A of subunit 1 to the active site in subunit 1, a binuclear center (BNC) formed by heme A3 and copper B (CU(B)). The BNC reduces molecular oxygen to 2 water molecules using 4 electrons from cytochrome c in the IMS and 4 protons from the mitochondrial matrix. The sequence is that of Cytochrome c oxidase subunit 2 (MT-CO2) from Speothos venaticus (Bush dog).